We begin with the raw amino-acid sequence, 780 residues long: ATP-dependent 6-phosphofructokinase, liver type (780 aa).

Ala-2 carries the N-acetylalanine modification. The tract at residues 2 to 390 (ASVDLEKLRT…NWNIYKLLSH (389 aa)) is N-terminal catalytic PFK domain 1. ATP-binding positions include Gly-25, 88–89 (RC), and 118–121 (GDGS). Mg(2+) is bound at residue Asp-119. Substrate is bound by residues 164-166 (SID), Arg-201, 208-210 (MGR), Glu-264, Arg-292, and 298-301 (HVQR). Asp-166 acts as the Proton acceptor in catalysis. Ser-377 is modified (phosphoserine). Residues 391-400 (QKISKEKTNF) are interdomain linker. The C-terminal regulatory PFK domain 2 stretch occupies residues 401–780 (SLAILNVGAP…RRTLSIETGF (380 aa)). Residues Arg-470, 527 to 531 (TISNN), Arg-565, 572 to 574 (MGG), and Glu-628 contribute to the beta-D-fructose 2,6-bisphosphate site. O-linked (GlcNAc) serine glycosylation occurs at Ser-529. Tyr-640 carries the phosphotyrosine modification. Beta-D-fructose 2,6-bisphosphate contacts are provided by residues Arg-654, 660-663 (HLQQ), and Arg-734. A Phosphoserine modification is found at Ser-775.

It belongs to the phosphofructokinase type A (PFKA) family. ATP-dependent PFK group I subfamily. Eukaryotic two domain clade 'E' sub-subfamily. As to quaternary structure, homo- and heterotetramers. Phosphofructokinase (PFK) enzyme functions as a tetramer composed of different combinations of 3 types of subunits, called PFKM (M), PFKL (L) and PFKP (P). The composition of the PFK tetramer differs according to the tissue type it is present in. The kinetic and regulatory properties of the tetrameric enzyme are dependent on the subunit composition, hence can vary across tissues. Mg(2+) is required as a cofactor. GlcNAcylation at Ser-529 by OGT decreases enzyme activity, leading to redirect glucose flux through the oxidative pentose phosphate pathway. Glycosylation is stimulated by both hypoxia and glucose deprivation.

Its subcellular location is the cytoplasm. It catalyses the reaction beta-D-fructose 6-phosphate + ATP = beta-D-fructose 1,6-bisphosphate + ADP + H(+). It functions in the pathway carbohydrate degradation; glycolysis; D-glyceraldehyde 3-phosphate and glycerone phosphate from D-glucose: step 3/4. With respect to regulation, allosterically activated by ADP, AMP, or fructose 2,6-bisphosphate, and allosterically inhibited by ATP or citrate. GlcNAcylation by OGT overcomes allosteric regulation. Catalyzes the phosphorylation of D-fructose 6-phosphate to fructose 1,6-bisphosphate by ATP, the first committing step of glycolysis. Negatively regulates the phagocyte oxidative burst in response to bacterial infection by controlling cellular NADPH biosynthesis and NADPH oxidase-derived reactive oxygen species. Upon macrophage activation, drives the metabolic switch toward glycolysis, thus preventing glucose turnover that produces NADPH via pentose phosphate pathway. This chain is ATP-dependent 6-phosphofructokinase, liver type (PFKL), found in Bos taurus (Bovine).